We begin with the raw amino-acid sequence, 545 residues long: MKFDPAEIREAAEKDFDGTWKRGVDYLERPSLERIYPRRSYPHGRPHPVFETIQRLREAYLRMGFTEMMNPVIVDAQEVHRQFGSEALAVLDRCFYLAGLPRPDIGISESRLSEISSIVGKELTAEEIEALREILHSYKKGAVEGDDLVPEISKAINASDSQVSMMLESVFPEFRELRPEPTSRTLRSHMTSGWFISLSNLWYRMPLPVRLFSVDRCFRREQSEDAARLMSYHSASCVVMDEDMSVDEGKAISEGLLSQFGFENFRFRPDEKRSKYYIPGTQIEVYAYHPGLVGSETKYGSGWVEIATFGVYSPTALAQYDIPYPVLNLGLGVERLAMILYGSKDLRALSYPQLQPDWSLKPIEIARMIHVDKSPMTVTGKEIARSVVETCVKYGNTPSPCEFDAWEGELFGRRIKVSVVEPEENTKLCGPAYLNEIVVYRNEILGIPRTPKWEAAFEEGVQTGIRFIDAFAELAAHEIEMATIEGRGSETRVRIVRTAGEINVRIDPALERYITSYKKRIDIRGPVFTTVRSELMQGDKHGEKT.

Residues 189-191 (HMT), 234-236 (SAS), 276-277 (YY), and Asn-328 each bind substrate.

Belongs to the class-II aminoacyl-tRNA synthetase family. O-phosphoseryl-tRNA(Cys) synthetase subfamily. As to quaternary structure, homotetramer. Interacts with SepCysS.

It carries out the reaction tRNA(Cys) + O-phospho-L-serine + ATP = O-phospho-L-seryl-tRNA(Cys) + AMP + diphosphate. Functionally, catalyzes the attachment of O-phosphoserine (Sep) to tRNA(Cys). The protein is O-phosphoserine--tRNA(Cys) ligase of Methanothrix thermoacetophila (strain DSM 6194 / JCM 14653 / NBRC 101360 / PT) (Methanosaeta thermophila).